The primary structure comprises 199 residues: Molybdenum cofactor guanylyltransferase (199 aa).

GTP is bound by residues 12–14 (LAG), Lys25, Asn53, Asp71, and Asp101. Residue Asp101 coordinates Mg(2+).

It belongs to the MobA family. Monomer. Mg(2+) serves as cofactor.

It is found in the cytoplasm. The catalysed reaction is Mo-molybdopterin + GTP + H(+) = Mo-molybdopterin guanine dinucleotide + diphosphate. In terms of biological role, transfers a GMP moiety from GTP to Mo-molybdopterin (Mo-MPT) cofactor (Moco or molybdenum cofactor) to form Mo-molybdopterin guanine dinucleotide (Mo-MGD) cofactor. The protein is Molybdenum cofactor guanylyltransferase of Cupriavidus pinatubonensis (strain JMP 134 / LMG 1197) (Cupriavidus necator (strain JMP 134)).